The sequence spans 66 residues: Small ribosomal subunit protein eS30 (66 aa).

Residues 1 to 35 (MGKVHGGLNRAGKVRNATPKKDKEEKRKPKVGRAK) form a disordered region.

It belongs to the eukaryotic ribosomal protein eS30 family.

In Dictyostelium discoideum (Social amoeba), this protein is Small ribosomal subunit protein eS30 (rps30-1).